The sequence spans 85 residues: Small ribosomal subunit protein bS20 (85 aa).

The tract at residues Met-1–Ile-24 is disordered.

This sequence belongs to the bacterial ribosomal protein bS20 family.

Functionally, binds directly to 16S ribosomal RNA. This Bacillus mycoides (strain KBAB4) (Bacillus weihenstephanensis) protein is Small ribosomal subunit protein bS20.